Reading from the N-terminus, the 295-residue chain is uncharacterized protein (295 aa).

This sequence belongs to the NAD(P)-dependent epimerase/dehydratase family.

This is an uncharacterized protein from Schizosaccharomyces pombe (strain 972 / ATCC 24843) (Fission yeast).